A 119-amino-acid chain; its full sequence is Large ribosomal subunit protein bL20 (119 aa).

The protein belongs to the bacterial ribosomal protein bL20 family.

In terms of biological role, binds directly to 23S ribosomal RNA and is necessary for the in vitro assembly process of the 50S ribosomal subunit. It is not involved in the protein synthesizing functions of that subunit. The sequence is that of Large ribosomal subunit protein bL20 from Neisseria gonorrhoeae (strain ATCC 700825 / FA 1090).